The following is a 245-amino-acid chain: 3-deoxy-manno-octulosonate cytidylyltransferase (245 aa).

It belongs to the KdsB family.

Its subcellular location is the cytoplasm. The enzyme catalyses 3-deoxy-alpha-D-manno-oct-2-ulosonate + CTP = CMP-3-deoxy-beta-D-manno-octulosonate + diphosphate. It functions in the pathway nucleotide-sugar biosynthesis; CMP-3-deoxy-D-manno-octulosonate biosynthesis; CMP-3-deoxy-D-manno-octulosonate from 3-deoxy-D-manno-octulosonate and CTP: step 1/1. Its pathway is bacterial outer membrane biogenesis; lipopolysaccharide biosynthesis. Activates KDO (a required 8-carbon sugar) for incorporation into bacterial lipopolysaccharide in Gram-negative bacteria. The protein is 3-deoxy-manno-octulosonate cytidylyltransferase of Fusobacterium nucleatum subsp. nucleatum (strain ATCC 25586 / DSM 15643 / BCRC 10681 / CIP 101130 / JCM 8532 / KCTC 2640 / LMG 13131 / VPI 4355).